A 2731-amino-acid polypeptide reads, in one-letter code: Putative mediator of RNA polymerase II transcription subunit 12 (2731 aa).

Coiled-coil stretches lie at residues 5 to 37 (QQIL…QQQQ), 75 to 108 (HIQQ…QQVH), 141 to 189 (QQIH…QQQQ), and 275 to 304 (IQQL…QQQQ). Disordered stretches follow at residues 29–57 (QQQM…HMIH) and 101–145 (QQQQ…QIHQ). Low complexity predominate over residues 310–320 (QPQQQQQQQQP). Disordered stretches follow at residues 310 to 376 (QPQQ…DDKS), 432 to 451 (TQKS…RPVP), 685 to 708 (LGHG…QQPQ), and 1251 to 1341 (RNNN…QQKS). The segment covering 327–337 (QNPSYHSQSQI) has biased composition (polar residues). The span at 347-361 (KKYEIQKPADKKELG) shows a compositional bias: basic and acidic residues. The segment covering 688–701 (GHGHGHGHHSHSHS) has biased composition (basic residues). Over residues 1251 to 1268 (RNNNNNNKNKNNNKQSNN) the composition is skewed to low complexity. Acidic residues-rich tracts occupy residues 1275-1298 (NGEE…DNDE) and 1305-1326 (NDNE…DDQM). Coiled-coil stretches lie at residues 1316 to 1344 (EDED…SNEN) and 1375 to 1433 (KLKK…DEEL). Disordered regions lie at residues 1778 to 1825 (HDDN…NNNG), 1892 to 1958 (TQSS…NNTT), 2212 to 2258 (SSSS…NNVK), 2307 to 2351 (TSSV…QQQQ), 2472 to 2532 (EIEK…KPQT), and 2705 to 2731 (HQQI…NNYK). Low complexity-rich tracts occupy residues 1783-1824 (ENNN…NNNN), 1892-1909 (TQSS…QSPT), 1916-1958 (NSTN…NNTT), 2212-2250 (SSSS…QQQQ), 2307-2322 (TSSV…STTS), 2337-2351 (QQQT…QQQQ), 2472-2501 (EIEK…HQQL), 2508-2532 (LQQQ…KPQT), and 2705-2720 (HQQI…HQQQ). A coiled-coil region spans residues 2239 to 2270 (TNQQQQQQQQQQADQKNNVKKKLHELYQKIKS). Residues 2336–2363 (LQQQTSQQQQQQQQQQQQQSQQHQQQQQ) are a coiled coil. Residues 2523–2662 (QQLQQQKPQT…QQQQQQLQQL (140 aa)) are a coiled coil. Residues 2721–2731 (KCSTTKYNNYK) show a composition bias toward polar residues.

This sequence belongs to the Mediator complex subunit 12 family. In terms of assembly, component of the Mediator complex.

The protein localises to the nucleus. Component of the Mediator complex, a coactivator involved in the regulated transcription of nearly all RNA polymerase II-dependent genes. Mediator functions as a bridge to convey information from gene-specific regulatory proteins to the basal RNA polymerase II transcription machinery. Mediator is recruited to promoters by direct interactions with regulatory proteins and serves as a scaffold for the assembly of a functional preinitiation complex with RNA polymerase II and the general transcription factors. The sequence is that of Putative mediator of RNA polymerase II transcription subunit 12 (med12) from Dictyostelium discoideum (Social amoeba).